The primary structure comprises 374 residues: Probable dual-specificity RNA methyltransferase RlmN 3 (374 aa).

The Proton acceptor role is filled by Glu-96. Residues 110–350 (DHSRKTICIS…VTLRREKGHD (241 aa)) enclose the Radical SAM core domain. Cys-117 and Cys-355 are joined by a disulfide. Positions 124, 128, and 131 each coordinate [4Fe-4S] cluster. S-adenosyl-L-methionine-binding positions include 181–182 (GE), Ser-213, 236–238 (SLH), and Asn-312. Cys-355 functions as the S-methylcysteine intermediate in the catalytic mechanism.

The protein belongs to the radical SAM superfamily. RlmN family. Requires [4Fe-4S] cluster as cofactor.

The protein resides in the cytoplasm. It carries out the reaction adenosine(2503) in 23S rRNA + 2 reduced [2Fe-2S]-[ferredoxin] + 2 S-adenosyl-L-methionine = 2-methyladenosine(2503) in 23S rRNA + 5'-deoxyadenosine + L-methionine + 2 oxidized [2Fe-2S]-[ferredoxin] + S-adenosyl-L-homocysteine. It catalyses the reaction adenosine(37) in tRNA + 2 reduced [2Fe-2S]-[ferredoxin] + 2 S-adenosyl-L-methionine = 2-methyladenosine(37) in tRNA + 5'-deoxyadenosine + L-methionine + 2 oxidized [2Fe-2S]-[ferredoxin] + S-adenosyl-L-homocysteine. Its function is as follows. Specifically methylates position 2 of adenine 2503 in 23S rRNA and position 2 of adenine 37 in tRNAs. In Opitutus terrae (strain DSM 11246 / JCM 15787 / PB90-1), this protein is Probable dual-specificity RNA methyltransferase RlmN 3.